The primary structure comprises 232 residues: RNA chaperone ProQ (232 aa).

Residues 105-182 form a disordered region; it reads EAKARVQAQR…REEQHTPVSD (78 aa). Basic and acidic residues predominate over residues 117–136; the sequence is QQAKKREAAAAAGEKEDAPR. A compositionally biased stretch (basic residues) spans 137 to 146; that stretch reads RERKPRPTTP. The span at 147–177 shows a compositional bias: basic and acidic residues; the sequence is RRKEGAERKPRAQKPVEKAPKTVKAPREEQH.

The protein belongs to the ProQ family.

It is found in the cytoplasm. RNA chaperone with significant RNA binding, RNA strand exchange and RNA duplexing activities. May regulate ProP activity through an RNA-based, post-transcriptional mechanism. This Shigella flexneri serotype 5b (strain 8401) protein is RNA chaperone ProQ.